The chain runs to 1134 residues: Centrosomal protein of 131 kDa (1134 aa).

5 disordered regions span residues 111–131 (NSSESDYSLHKRTPDSSEEGE), 168–208 (DLPG…PLTL), 286–306 (ESSKQVEPTSPTPTLPKAPSS), 425–455 (VGKKKENVKPASADPIARSSKSKVTKSTINP), and 492–528 (DQKQYDGKHKPGLEDLDEAQDNDTASQLSLKSNEDSR). Residues 180–196 (MHADLDSSDCDNDKQEV) show a composition bias toward basic and acidic residues. Residues 494-504 (KQYDGKHKPGL) are compositionally biased toward basic and acidic residues. The segment covering 513–522 (NDTASQLSLK) has biased composition (polar residues). A coiled-coil region spans residues 732-1131 (LESQNQAWEH…AVIRQQRKDY (400 aa)).

The protein belongs to the CEP131 family. In terms of tissue distribution, expressed in chordotonal (Ch) neuronal precursors. Expressed in ciliated cells, like sensory neurons and spermatids.

The protein localises to the cytoplasm. Its subcellular location is the cytoskeleton. It is found in the microtubule organizing center. It localises to the centrosome. The protein resides in the cilium basal body. The protein localises to the centriole. Its function is as follows. Cilium-specific protein with a role in cilium/flagellum formation. May be involved in transport of components into the growing cilium. In germ cells and sensory neurons, plays a role with Cby in the building of the transition zone necessary for the formation of the ciliary cap and for the correct elongation of the axoneme. This chain is Centrosomal protein of 131 kDa, found in Drosophila melanogaster (Fruit fly).